The primary structure comprises 401 residues: MPPILLTFLLFSNVYANFMNMLMGSSSAPLQQYRAYAGCSSSGCVPATIVPKSSGFWPNADMIAGLQTEQRSQNQNQNSNNPQQDDPRTSQSTGQINGNVPGSSSSNQQPVIYIARAGSDKYKNSEVTTSTPTPNGFNFGNGFQGGQNQNTGFSSGFFNNQNQNSNQNLNQNNFQQNQNLGASSGFFNNQNQQNSQQNQVNGPTSGFSNQQTSNQNSGFFNNQNQQNGQNFGNSGNQNGVNPYSGAFSNGQNQNQQGFFGNNQNNQQNSNGQVQGSQNNQIWNQNQNPNILPFGPNLVNSNTQFGPQPFQPIQVGSIRQPFSNKDWNFQPGGQAVQFVGGGGSGGAPGSQSVPMTDEAQQIAVQIQAIRDNLSITRNESNYLINQLKLSLPQELQNQLEMV.

Over residues 70-84 (QRSQNQNQNSNNPQQ) the composition is skewed to low complexity. 2 disordered regions span residues 70 to 109 (QRSQNQNQNSNNPQQDDPRTSQSTGQINGNVPGSSSSNQQ) and 122 to 303 (YKNS…SNTQ). 2 stretches are compositionally biased toward polar residues: residues 89-109 (TSQSTGQINGNVPGSSSSNQQ) and 125-134 (SEVTTSTPTP). Low complexity-rich tracts occupy residues 135 to 181 (NGFN…QNLG), 188 to 239 (NNQN…NQNG), and 247 to 289 (FSNG…QNPN).

Expressed in the pharyngeal glands.

This is Prion-like-(Q/N-rich) domain-bearing protein 8 (pqn-8) from Caenorhabditis elegans.